We begin with the raw amino-acid sequence, 169 residues long: Ribosome maturation factor RimM (169 aa).

Residues 93–167 (PENSFFISDI…KISVILPKGL (75 aa)) form the PRC barrel domain.

It belongs to the RimM family. Binds ribosomal protein uS19.

Its subcellular location is the cytoplasm. An accessory protein needed during the final step in the assembly of 30S ribosomal subunit, possibly for assembly of the head region. Essential for efficient processing of 16S rRNA. May be needed both before and after RbfA during the maturation of 16S rRNA. It has affinity for free ribosomal 30S subunits but not for 70S ribosomes. This Ruminiclostridium cellulolyticum (strain ATCC 35319 / DSM 5812 / JCM 6584 / H10) (Clostridium cellulolyticum) protein is Ribosome maturation factor RimM.